We begin with the raw amino-acid sequence, 261 residues long: MRLEMIGLRTWLLATVVGWALLVCVLAVAGLGKRVELLPDDPALVQRLPALPAPAPERLGPFEKYAEIAAHPAFAEDRLPHPFFLSGNDGSGAASTVRLTGVLLTSTFKMATLTLDPADSVRVQLGGDAVKGYRLLALQPRSATIEGPGGTQTLELQVFNGQGGQPPTAIGGRPQAPGAVPPLPPNVPPAPATPAPPPAEVPQQQPGGQAPPTVPPQRSDGAQEAPRPSDEQMRAIRERIEARRRQLQQQRQGGSTPGQTQ.

Over 1-10 (MRLEMIGLRT) the chain is Cytoplasmic. A helical transmembrane segment spans residues 11 to 31 (WLLATVVGWALLVCVLAVAGL). Topologically, residues 32–261 (GKRVELLPDD…QGGSTPGQTQ (230 aa)) are periplasmic. Residues 158–261 (VFNGQGGQPP…QGGSTPGQTQ (104 aa)) form a disordered region. The span at 179–200 (AVPPLPPNVPPAPATPAPPPAE) shows a compositional bias: pro residues. The span at 201 to 211 (VPQQQPGGQAP) shows a compositional bias: low complexity. Residues 227 to 244 (RPSDEQMRAIRERIEARR) are compositionally biased toward basic and acidic residues.

Binds to XpsD.

The protein localises to the cell inner membrane. Functionally, involved in a general secretion pathway (GSP) for the export of proteins. This Xanthomonas campestris pv. campestris (strain ATCC 33913 / DSM 3586 / NCPPB 528 / LMG 568 / P 25) protein is General secretion pathway protein N (xpsN).